We begin with the raw amino-acid sequence, 199 residues long: MSKVLVLYYSTYGHVEALAEAVAEGARATGATVDVKRVPETVPAAVAEASHFKVDQKAPVATVEDLANYDAIVVGTPTRFGRISSQMAAFLDQAGGLWMRGVLNGKVGGAFTSTATQHGGQEATLFSIIANLLHFGMTIVGLPYSHQGQMTLDEIVGGSPYGATTIAGGQGQRQPSAIELEGARHQGELIAKTANKLFG.

Residues 4–190 form the Flavodoxin-like domain; it reads VLVLYYSTYG…EGARHQGELI (187 aa). Residues 10-15 and 78-80 contribute to the FMN site; these read STYGHV and TRF. NAD(+) is bound at residue tyrosine 12. Tryptophan 98 lines the substrate pocket. FMN-binding positions include 113 to 119 and histidine 134; that span reads STATQHG.

It belongs to the WrbA family. The cofactor is FMN.

It carries out the reaction a quinone + NADH + H(+) = a quinol + NAD(+). The catalysed reaction is a quinone + NADPH + H(+) = a quinol + NADP(+). This chain is NAD(P)H dehydrogenase (quinone), found in Cupriavidus metallidurans (strain ATCC 43123 / DSM 2839 / NBRC 102507 / CH34) (Ralstonia metallidurans).